A 292-amino-acid polypeptide reads, in one-letter code: Selenate reductase subunit B (292 aa).

Positions 1-43 (MGSKETKNTSRRDFLIKGAGAAALGAGAFAISQVPLLEKLASA) form a signal peptide, tat-type signal. 4Fe-4S ferredoxin-type domains lie at 84–113 (WIMVIDLKKCVGCSSCTVACVSENVLPPGV), 129–160 (VTKKFTPRPCMQCEHPPCTKVCPIGATYKSED), and 161–190 (GIVAIDYDKCIGCRYCITACPYGARTFDWG). The [4Fe-4S] cluster site is built by C93, C96, C99, C103, C138, C141, C146, C150, C170, C173, C176, C180, C230, C233, C245, and C249.

The complex is composed of three subunits: SrdA, SrdB and SrdC. Requires [4Fe-4S] cluster as cofactor. Post-translationally, predicted to be exported by the Tat system. The position of the signal peptide cleavage has not been experimentally proven.

The protein resides in the secreted. The enzyme catalyses selenite + a quinone + H2O = selenate + a quinol. Component of the respiratory selenate reductase complex, which catalyzes the reduction of selenate to selenite. This subunit probably transfers electrons from SrdC to SrdA. The chain is Selenate reductase subunit B from Mesobacillus selenatarsenatis (strain DSM 18680 / JCM 14380 / FERM P-15431 / SF-1).